We begin with the raw amino-acid sequence, 642 residues long: Voltage-gated potassium channel KCNC2 (642 aa).

Topologically, residues 1 to 233 (MGKIESNERV…EDPYSSRAAR (233 aa)) are cytoplasmic. Residues 45–98 (DCLTAAGDKLQPLPPPLSPPPRPPPLSPVPSGCFEGGAGNCSSHGGNGGNGGSD) are disordered. Positions 56 to 72 (PLPPPLSPPPRPPPLSP) are enriched in pro residues. The segment covering 78–98 (FEGGAGNCSSHGGNGGNGGSD) has biased composition (gly residues). Residues H128, C134, C155, and C156 each contribute to the Zn(2+) site. A helical transmembrane segment spans residues 234 to 254 (FIAFASLFFILVSITTFCLET). N-linked (GlcNAc...) asparagine glycosylation is found at N263 and N270. The chain crosses the membrane as a helical span at residues 287–307 (TYVEGVCVVWFTFEFLVRIVF). At 308–317 (SPNKLEFIKN) the chain is on the cytoplasmic side. The helical transmembrane segment at 318-338 (LLNIIDFVAILPFYLEVGLSG) threads the bilayer. The chain crosses the membrane as a helical; Voltage-sensor span at residues 350-372 (FLRVVRFVRILRIFKLTRHFVGL). The Cytoplasmic segment spans residues 373–385 (RVLGHTLRASTNE). A helical transmembrane segment spans residues 386–406 (FLLLIIFLALGVLIFATMIYY). The K(+) site is built by T441, L442, G443, and Y444. Residues 441–446 (TLGYGD) carry the Selectivity filter motif. Residues 457-477 (VGALCALAGVLTIAMPVPVIV) traverse the membrane as a helical segment. At 478 to 642 (NNFGMYYSLA…RSRSPIPSIL (165 aa)) the chain is on the cytoplasmic side. The disordered stretch occupies residues 542-576 (SVLSGDDSTGSEPPLSPPERLPIRRSSTRDKNRRG). S604 is subject to Phosphoserine.

Belongs to the potassium channel family. C (Shaw) (TC 1.A.1.2) subfamily. Kv3.2/KCNC2 sub-subfamily. Homotetramer and heterotetramer with other channel-forming alpha subunits, such as KCNC1. Interacts with KCNC1. Homotetramer or heterotetramer channel activity is regulated by association with modulating ancillary subunits such as KCNE1, KCNE2 and KCNE3, creating a functionally diverse range of channel complexes. Interacts with KCNE1, KCNE2 and KCNE3. Post-translationally, phosphorylated by PKA in cortical synaptosomes. cAMP-dependent phosphorylation inhibits channel activity. Histamine H2 receptor- and PKA-induced phosphorylation extends action potential spike duration, reduces action potential spike amplitude, sustains maximum firing frequency in hippocampal interneurons; also reduces the incidence of high-frequency oscillations in hippocampal CA3 pyramidal cell layers. Weakly expressed in the brain at postnatal age day 7 (P7) and increased at P60. Not detectable in newborn hippocampus. Expressed weakly at P7 in the early developing hippocampus, increasing progressively and reaching a plateau of expression at P14 that is maintained throughout P51. Expressed in paravalbumin- and somatostain-containing inhibitory interneurons of the hippocampus; in the CA1/CA3 stratum oriens-alveus and stratum pyramidale and in cells within the hilus and subgranular layer of the dentate gyrus (DG). Strongly expressed in parvalbumin (PV)-containing fast-spiking GABAergic inhibitor interneurons in deep cortical layers V and VI. Also expressed in non-fast-spiking calbindin (CB)- and/or somatostatin (SOM)-containing interneurons in deep cortical layers V and VI. Expressed in starburst amacrine cells of the retina in the inner nuclear layer (INL) and ganglion cell layer (GCL). Expressed in the suprachiasmatic nucleus (SCN) (at protein level). Expressed in the early developing brain, increasing progressively until P14.

Its subcellular location is the cell membrane. It is found in the membrane. The protein resides in the perikaryon. The protein localises to the cell projection. It localises to the axon. Its subcellular location is the dendrite. It is found in the postsynaptic cell membrane. The protein resides in the presynaptic cell membrane. The protein localises to the synapse. It localises to the synaptosome. Its subcellular location is the apical cell membrane. It is found in the basolateral cell membrane. It carries out the reaction K(+)(in) = K(+)(out). Inhibited by millimolar levels of tetraethylammonium (TEA). Contrary to other channels, inhibited only by millimolar levels of 4-aminopyridine (4-AP). Inhibited by Stichodactyla helianthus peptide ShK. Functionally, voltage-gated potassium channel that mediates transmembrane potassium transport in excitable membranes, primarily in the brain. Contributes to the regulation of the fast action potential repolarization and in sustained high-frequency firing in neurons of the central nervous system. Homotetramer channels mediate delayed-rectifier voltage-dependent potassium currents that activate rapidly at high-threshold voltages and inactivate slowly. Forms tetrameric channels through which potassium ions pass in accordance with their electrochemical gradient. The channel alternates between opened and closed conformations in response to the voltage difference across the membrane. Can form functional homotetrameric and heterotetrameric channels that contain variable proportions of KCNC1, and possibly other family members as well; channel properties depend on the type of alpha subunits that are part of the channel. Channel properties may be modulated by either the association with ancillary subunits, such as KCNE1, KCNE2 and KCNE3 or indirectly by nitric oxide (NO) through a cGMP- and PKG-mediated signaling cascade, slowing channel activation and deactivation of delayed rectifier potassium channels. Contributes to fire sustained trains of very brief action potentials at high frequency in thalamocortical and suprachiasmatic nucleus (SCN) neurons, in hippocampal and neocortical interneurons and in retinal ganglion cells. Sustained maximal action potential firing frequency in inhibitory hippocampal interneurons is negatively modulated by histamine H2 receptor activation in a cAMP- and protein kinase (PKA) phosphorylation-dependent manner. Plays a role in maintaining the fidelity of synaptic transmission in neocortical GABAergic interneurons by generating action potential (AP) repolarization at nerve terminals, thus reducing spike-evoked calcium influx and GABA neurotransmitter release. Required for long-range synchronization of gamma oscillations over distance in the neocortex. Contributes to the modulation of the circadian rhythm of spontaneous action potential firing in suprachiasmatic nucleus (SCN) neurons in a light-dependent manner. The polypeptide is Voltage-gated potassium channel KCNC2 (Mus musculus (Mouse)).